Reading from the N-terminus, the 336-residue chain is Dihydroorotate dehydrogenase (quinone) (336 aa).

FMN is bound by residues 62-66 and Thr86; that span reads AGLDK. Lys66 serves as a coordination point for substrate. 111–115 lines the substrate pocket; the sequence is NRMGF. FMN contacts are provided by Asn139 and Asn172. Asn172 is a substrate binding site. The Nucleophile role is filled by Ser175. Asn177 is a substrate binding site. Residues Lys217 and Thr245 each contribute to the FMN site. 246-247 provides a ligand contact to substrate; the sequence is NT. FMN-binding positions include Gly268, Gly297, and 318-319; that span reads YS.

It belongs to the dihydroorotate dehydrogenase family. Type 2 subfamily. In terms of assembly, monomer. FMN is required as a cofactor.

Its subcellular location is the cell membrane. The enzyme catalyses (S)-dihydroorotate + a quinone = orotate + a quinol. Its pathway is pyrimidine metabolism; UMP biosynthesis via de novo pathway; orotate from (S)-dihydroorotate (quinone route): step 1/1. In terms of biological role, catalyzes the conversion of dihydroorotate to orotate with quinone as electron acceptor. The protein is Dihydroorotate dehydrogenase (quinone) of Salmonella arizonae (strain ATCC BAA-731 / CDC346-86 / RSK2980).